A 359-amino-acid chain; its full sequence is Pyruvate dehydrogenase E1 component subunit beta, mitochondrial (359 aa).

A mitochondrion-targeting transit peptide spans 1 to 30; it reads MAVVAGLVRGPLRQASGLLKRRFHRSAPAA. The residue at position 67 (Tyr-67) is a Phosphotyrosine. Residue Glu-89 participates in thiamine diphosphate binding. K(+) is bound by residues Ile-142, Ala-190, Ile-191, Asp-193, and Asn-195. Lys-354 is modified (N6-acetyllysine).

As to quaternary structure, heterotetramer of two PDHA1 and two PDHB subunits. The heterotetramer interacts with DLAT, and is part of the multimeric pyruvate dehydrogenase complex that contains multiple copies of pyruvate dehydrogenase (E1), dihydrolipoamide acetyltransferase (DLAT, E2) and lipoamide dehydrogenase (DLD, E3). These subunits are bound to an inner core composed of about 48 DLAT and 12 PDHX molecules. Interacts with DLAT. Thiamine diphosphate serves as cofactor.

It is found in the mitochondrion matrix. It catalyses the reaction N(6)-[(R)-lipoyl]-L-lysyl-[protein] + pyruvate + H(+) = N(6)-[(R)-S(8)-acetyldihydrolipoyl]-L-lysyl-[protein] + CO2. Functionally, the pyruvate dehydrogenase complex catalyzes the overall conversion of pyruvate to acetyl-CoA and CO(2), and thereby links the glycolytic pathway to the tricarboxylic cycle. The polypeptide is Pyruvate dehydrogenase E1 component subunit beta, mitochondrial (Pdhb) (Mus musculus (Mouse)).